Here is a 202-residue protein sequence, read N- to C-terminus: Probable septum site-determining protein MinC (202 aa).

It belongs to the MinC family. As to quaternary structure, interacts with MinD and FtsZ.

Cell division inhibitor that blocks the formation of polar Z ring septums. Rapidly oscillates between the poles of the cell to destabilize FtsZ filaments that have formed before they mature into polar Z rings. Prevents FtsZ polymerization. The polypeptide is Probable septum site-determining protein MinC (Dictyoglomus turgidum (strain DSM 6724 / Z-1310)).